Reading from the N-terminus, the 427-residue chain is MSTSFENKATNRGVITFTISQDKIKPALDKAFNKIKKDLNAPGFRKGHMPRPVFNQKFGEEVLYEDALNIVLPEAYEAAVTELGLDVVAQPKIDVVSMEKGKEWTLSAEVVTKPEVKLGDYKNLVVEVDASKEVSDEDVDAKIERERQNLAELIIKDGEAAQGDTVVIDFVGSVDGVEFDGGKGDNFSLELGSGQFIPGFEDQLVGAKAGDEVEVNVTFPESYQAEDLAGKAAKFMTTIHEVKTKEVPELDDELAKDIDEDVDTLEDLKVKYRKELEAAQETAYDDAVEGAAIELAVANAEIVDLPEEMIHEEVNRSVNEFMGNMQRQGISPEMYFQLTGTTQEDLHNQYSAEADKRVKTNLVIEAIAKAEGFEATDSEIEQEINDLATEYNMPADQVRSLLSADMLKHDIAMKKAVEVITSTASVK.

The PPIase FKBP-type domain maps to 163 to 248 (GDTVVIDFVG…IHEVKTKEVP (86 aa)).

It belongs to the FKBP-type PPIase family. Tig subfamily.

It is found in the cytoplasm. The enzyme catalyses [protein]-peptidylproline (omega=180) = [protein]-peptidylproline (omega=0). Functionally, involved in protein export. Acts as a chaperone by maintaining the newly synthesized protein in an open conformation. Functions as a peptidyl-prolyl cis-trans isomerase. The protein is Trigger factor (tig) of Streptococcus pyogenes serotype M1.